Reading from the N-terminus, the 236-residue chain is SERTA domain-containing protein 1 (236 aa).

Positions 1-20 (MLSKGLKRKREEEEEKEPLA) are disordered. Positions 38–85 (PAVASSSLFDLSVLKLHHSLQQSEPDLRHLVLVVNTLRRIQASMAPAA) constitute an SERTA domain. The disordered stretch occupies residues 189–211 (PASEGLKPGPEDGPGKEEAPELD). The segment covering 197 to 207 (GPEDGPGKEEA) has biased composition (basic and acidic residues).

In terms of assembly, interacts with the PHD-bromodomain of TIF1, TRIM28/TIF1B and p300/CBP. Interacts with E2F1 and TFDP1; modulates transactivation activity of TFDP1/E2F complexes. Also interacts with CDK4. In terms of processing, polyubiquitinated, which promotes proteasomal degradation.

In terms of biological role, acts at E2F-responsive promoters as coregulator to integrate signals provided by PHD- and/or bromodomain-containing transcription factors. Stimulates E2F1/TFDP1 transcriptional activity. Renders the activity of cyclin D1/CDK4 resistant to the inhibitory effects of CDKN2A/p16INK4A. The polypeptide is SERTA domain-containing protein 1 (SERTAD1) (Homo sapiens (Human)).